We begin with the raw amino-acid sequence, 1465 residues long: DNA polymerase III PolC-type (1465 aa).

The 153-residue stretch at 431-583 (DVETTGLSAM…YDAEATGRLL (153 aa)) folds into the Exonuclease domain.

The protein belongs to the DNA polymerase type-C family. PolC subfamily.

The protein localises to the cytoplasm. The enzyme catalyses DNA(n) + a 2'-deoxyribonucleoside 5'-triphosphate = DNA(n+1) + diphosphate. Functionally, required for replicative DNA synthesis. This DNA polymerase also exhibits 3' to 5' exonuclease activity. The protein is DNA polymerase III PolC-type of Streptococcus pyogenes.